Consider the following 363-residue polypeptide: Membrane-bound lytic murein transglycosylase C (363 aa).

Positions 1 to 15 (MKKYIVFAIIPFLFA) are cleaved as a signal peptide. Cys16 is lipidated: N-palmitoyl cysteine. Cys16 carries S-diacylglycerol cysteine lipidation.

The protein belongs to the transglycosylase Slt family.

The protein resides in the cell outer membrane. The catalysed reaction is Exolytic cleavage of the (1-&gt;4)-beta-glycosidic linkage between N-acetylmuramic acid (MurNAc) and N-acetylglucosamine (GlcNAc) residues in peptidoglycan, from either the reducing or the non-reducing ends of the peptidoglycan chains, with concomitant formation of a 1,6-anhydrobond in the MurNAc residue.. Its function is as follows. Murein-degrading enzyme. May play a role in recycling of muropeptides during cell elongation and/or cell division. The chain is Membrane-bound lytic murein transglycosylase C from Histophilus somni (strain 129Pt) (Haemophilus somnus).